A 299-amino-acid polypeptide reads, in one-letter code: Ribosomal protein L11 methyltransferase (299 aa).

Positions 152, 172, 194, and 234 each coordinate S-adenosyl-L-methionine.

Belongs to the methyltransferase superfamily. PrmA family.

Its subcellular location is the cytoplasm. The enzyme catalyses L-lysyl-[protein] + 3 S-adenosyl-L-methionine = N(6),N(6),N(6)-trimethyl-L-lysyl-[protein] + 3 S-adenosyl-L-homocysteine + 3 H(+). Methylates ribosomal protein L11. This chain is Ribosomal protein L11 methyltransferase, found in Geobacter sulfurreducens (strain ATCC 51573 / DSM 12127 / PCA).